Here is a 483-residue protein sequence, read N- to C-terminus: PRAME family member 12 (483 aa).

The LRR 1; degenerate repeat unit spans residues arginine 97–leucine 122. The stretch at histidine 177–glutamate 201 is one LRR 2; degenerate repeat. Residues leucine 202–glutamine 228 form an LRR 3; degenerate repeat. The LRR 4; degenerate repeat unit spans residues methionine 229–lysine 264. 5 LRR repeats span residues leucine 265–leucine 290, glutamine 291–lysine 322, glutamate 323–valine 341, glutamate 347–arginine 374, and cysteine 375–histidine 399.

It belongs to the PRAME family.

The chain is PRAME family member 12 from Homo sapiens (Human).